Reading from the N-terminus, the 258-residue chain is GCN5-related N-acetyltransferase 2, chloroplastic (258 aa).

Residues 1-58 (MLLIPISSSSSSSISPPPNSYPSNHHSLFFSNLTFPIQHGSRKLKTLRLRANFWESIR) constitute a chloroplast transit peptide. The interval 107–194 (IIFSSGGEID…DHAFNATIWD (88 aa)) is interaction with begomoviruses NSP protein. One can recognise an N-acetyltransferase domain in the interval 107–258 (IIFSSGGEID…GIKGMFWYPK (152 aa)). Acetyl-CoA contacts are provided by residues 195-197 (VLV), 203-208 (GQGLGK), 231-233 (DSQ), and Tyr238. Tyr238 serves as the catalytic Proton donor.

The protein belongs to the acetyltransferase family. GNAT subfamily. In terms of assembly, oligomer. Interacts with begomoviruses NSP but not with CP. This interaction may allow NSP to recruit NSI monomers to acetylate viral genome-bound CP and thus regulate nuclear export of viral genome by NSP. S-sulfhydrated and activated by hydrogen sulfide H(2)S to promote melatonin accumulation and subsequent melatonin-dependent stomotal closure to combat osmotic stress. Post-translationally, autoacetylated. As to expression, highly expressed in cauline leaves and seeds, at lower levels in stems, siliques, inflorescences and rosettes leaves and at very low levels in roots. Expressed in the xylem parenchyma and phloem of the leaves and root, and in guard cells of young leaves.

The protein resides in the plastid. It localises to the chloroplast. The enzyme catalyses 5-methoxytryptamine + acetyl-CoA = melatonin + CoA + H(+). It catalyses the reaction L-lysyl-[histone] + acetyl-CoA = N(6)-acetyl-L-lysyl-[histone] + CoA + H(+). The catalysed reaction is L-lysyl-[protein] + acetyl-CoA = N(6)-acetyl-L-lysyl-[protein] + CoA + H(+). It carries out the reaction serotonin + acetyl-CoA = N-acetylserotonin + CoA + H(+). The enzyme catalyses N-terminal L-alanyl-[protein] + acetyl-CoA = N-terminal N(alpha)-acetyl-L-alanyl-[protein] + CoA + H(+). It catalyses the reaction N-terminal L-seryl-[protein] + acetyl-CoA = N-terminal N(alpha)-acetyl-L-seryl-[protein] + CoA + H(+). The catalysed reaction is N-terminal L-valyl-[protein] + acetyl-CoA = N-terminal N(alpha)-acetyl-L-valyl-[protein] + CoA + H(+). It carries out the reaction N-terminal glycyl-[protein] + acetyl-CoA = N-terminal N(alpha)-acetylglycyl-[protein] + CoA + H(+). The enzyme catalyses an N-terminal L-alpha-aminoacyl-[protein] + acetyl-CoA = N-terminal N(alpha)-acetyl-L-alpha-aminoacyl-[protein] + CoA + H(+). It catalyses the reaction N-terminal L-threonyl-[protein] + acetyl-CoA = N-terminal N(alpha)-acetyl-L-threonyl-[protein] + CoA + H(+). The catalysed reaction is N-terminal L-methionyl-[protein] + acetyl-CoA = N-terminal N(alpha)-acetyl-L-methionyl-[protein] + CoA + H(+). It carries out the reaction N-terminal L-leucyl-[protein] + acetyl-CoA = N-terminal N(alpha)-acetyl-L-leucyl-[protein] + CoA + H(+). Its activity is regulated as follows. Inhibited by the viral nuclear shuttle protein (NSP) that binds to the region required for oligomerization. In terms of biological role, protein acetyltransferase with dual specificity triggering both N-alpha-acetylation (NTA), with a preference for alanine, serine, threonine, methionine and to a lower extent valine as substrates (can also use glycine and leucine), and epsilon-lysine acetylation (KA) of several plastid proteins. Triggers lysine acetylation in KEA1 and KEA2. Acetylates in vitro histones H2A and H3. Does not act as a transcriptional activator but required for the dynamic reorganization of thylakoid protein complexes and grana during photosynthetic state transitions. Involved in melatonin biosynthesis by catalyzing the formation of N-acetylserotonin (NAS) from serotonin and of melatonin (N-acetyl-5-methoxytryptamine) from 5-methoxytryptamine (5-MT). By triggering melatonin biosynthesis, contributes to the chloroplast protein quality control (CPQC), which plays a pivotal role in starch synthesis, and confers melatonin-associated tolerance to high light (HL) stress. Prevents the accumulation of oil and anthocyanin content in mature seeds and avoids seed germination in a melatonin-dependent manner, but promotes mucilage production in the seed coat. Contributes to melatonin-mediated anthocyanin production in cold-exposed seedlings. Implicated in melatonin-monitored circadian dynamics of stomatal aperture to minimize night water loss and promote drought tolerance, partly by triggering hydrogen sulfide H(2)S-dependent stomotal closure in response to osmotic stress. Functionally, (Microbial infection) Required for begomovirus infection and systemic spread. In case of begomoviruses infection, acetylates the capsid protein (CP), but not the nuclear shuttle protein (NSP). Stimulates melatonin-triggered defense responses to the necrotrophic Botrytis cinerea. This is GCN5-related N-acetyltransferase 2, chloroplastic from Arabidopsis thaliana (Mouse-ear cress).